The chain runs to 303 residues: UDP-3-O-acyl-N-acetylglucosamine deacetylase (303 aa).

Zn(2+) is bound by residues H78, H237, and D241. Catalysis depends on H264, which acts as the Proton donor.

This sequence belongs to the LpxC family. The cofactor is Zn(2+).

The catalysed reaction is a UDP-3-O-[(3R)-3-hydroxyacyl]-N-acetyl-alpha-D-glucosamine + H2O = a UDP-3-O-[(3R)-3-hydroxyacyl]-alpha-D-glucosamine + acetate. Its pathway is glycolipid biosynthesis; lipid IV(A) biosynthesis; lipid IV(A) from (3R)-3-hydroxytetradecanoyl-[acyl-carrier-protein] and UDP-N-acetyl-alpha-D-glucosamine: step 2/6. In terms of biological role, catalyzes the hydrolysis of UDP-3-O-myristoyl-N-acetylglucosamine to form UDP-3-O-myristoylglucosamine and acetate, the committed step in lipid A biosynthesis. This Stenotrophomonas maltophilia (strain K279a) protein is UDP-3-O-acyl-N-acetylglucosamine deacetylase.